The following is a 238-amino-acid chain: Glycerol-3-phosphate acyltransferase (238 aa).

The next 6 membrane-spanning stretches (helical) occupy residues 5 to 25 (VIFGSNILLILVAYFIGSINF), 61 to 81 (FLVFFLDVSKSFWFAIISAIL), 88 to 108 (FGAVITQLVVLFVIIGHVFPI), 125 to 145 (IASLNIILAIIGGIIFFAMIF), 149 to 169 (IVSLGSFITPFILVIFMIIPW), and 194 to 214 (AWYLSSLFLFLAALIILFTHI).

It belongs to the PlsY family. Probably interacts with PlsX.

It is found in the cell membrane. The catalysed reaction is an acyl phosphate + sn-glycerol 3-phosphate = a 1-acyl-sn-glycero-3-phosphate + phosphate. It participates in lipid metabolism; phospholipid metabolism. Its function is as follows. Catalyzes the transfer of an acyl group from acyl-phosphate (acyl-PO(4)) to glycerol-3-phosphate (G3P) to form lysophosphatidic acid (LPA). This enzyme utilizes acyl-phosphate as fatty acyl donor, but not acyl-CoA or acyl-ACP. This Mycoplasma mobile (strain ATCC 43663 / 163K / NCTC 11711) (Mesomycoplasma mobile) protein is Glycerol-3-phosphate acyltransferase.